A 639-amino-acid chain; its full sequence is Wall-associated receptor kinase-like 15 (639 aa).

An N-terminal signal peptide occupies residues 1–25 (MELPWLSLTTFTLSLLIYFSSTTQA). Residues 26–282 (FKRCPNCGST…KRKSCKRWSN (257 aa)) are Extracellular-facing. Residues asparagine 68, asparagine 115, asparagine 126, asparagine 141, and asparagine 241 are each glycosylated (N-linked (GlcNAc...) asparagine). Residues 283-303 (LPLLGGLAGGVGAILIAGFIT) traverse the membrane as a helical segment. The Cytoplasmic segment spans residues 304-639 (KTIVSKQNRR…KEIENILHGI (336 aa)). The Protein kinase domain occupies 354-639 (FAKSNLLGFG…KEIENILHGI (286 aa)). Residues 360-368 (LGFGGFGEV) and lysine 382 contribute to the ATP site. The active-site Proton acceptor is aspartate 484.

It belongs to the protein kinase superfamily. Ser/Thr protein kinase family.

Its subcellular location is the membrane. It catalyses the reaction L-seryl-[protein] + ATP = O-phospho-L-seryl-[protein] + ADP + H(+). The catalysed reaction is L-threonyl-[protein] + ATP = O-phospho-L-threonyl-[protein] + ADP + H(+). Putative serine/threonine-protein kinase that may function as a signaling receptor of extracellular matrix component. The sequence is that of Wall-associated receptor kinase-like 15 (WAKL15) from Arabidopsis thaliana (Mouse-ear cress).